Reading from the N-terminus, the 136-residue chain is Large ribosomal subunit protein eL27 (136 aa).

One can recognise a KOW domain in the interval 5-40 (MKPGKVVLVLAGRYSGRKAVIVKNIDDGTSDRPYSH). 2 positions are modified to N6-acetyllysine: K27 and K93.

This sequence belongs to the eukaryotic ribosomal protein eL27 family. As to quaternary structure, component of the large ribosomal subunit. Interacts with RRP1B. Component of the large ribosomal subunit. Interacts with RRP1B. Interacts with DHX33.

Its subcellular location is the cytoplasm. The protein resides in the cytosol. It is found in the rough endoplasmic reticulum. In terms of biological role, component of the large ribosomal subunit. Required for proper rRNA processing and maturation of 28S and 5.8S rRNAs. The sequence is that of Large ribosomal subunit protein eL27 (RPL27) from Bos taurus (Bovine).